The chain runs to 561 residues: PR domain zinc finger protein 14 (561 aa).

A disordered region spans residues 1–20; it reads MALPPSGETQSQDKANYLPQ. The span at 7 to 20 shows a compositional bias: polar residues; sequence GETQSQDKANYLPQ. Positions 184-373 are interaction with CBFA2T2; the sequence is GFNFTEEELS…GVPMNLRVTE (190 aa). The SET domain occupies 241–356; that stretch reads EGLCLMQTSF…RNQELLVWYG (116 aa). Tyrosine 355 serves as a coordination point for S-adenosyl-L-methionine. The segment at 390–416 adopts a C2H2-type 1; atypical zinc-finger fold; that stretch reads YRCERCGKVFTYKYYRDKHLKYTPCVD. C2H2-type zinc fingers lie at residues 422–445, 451–473, 479–501, 507–530, and 536–558; these read FPCS…LHVH, YLCS…MRVH, YQCV…IRQH, FKCK…RRSH, and SSCD…MRLH.

The protein belongs to the class V-like SAM-binding methyltransferase superfamily. Interacts with CBFA2T2. Restricted to embryonic stem cells and primordial germ cells. Not detected in epiblast-derived stem cells.

Its subcellular location is the nucleus. In terms of biological role, transcription factor that has both positive and negative roles on transcription. Plays a role in cellular pluripotency. Essential for germ cell development at 2 levels: the reacquisition of potential pluripotency, including SOX2 up-regulation, and successful epigenetic reprogramming, characterized by EHMT1 repression. Its association with CBFA2T2 is required for the functions in pluripotency and germ cell formation. This Mus musculus (Mouse) protein is PR domain zinc finger protein 14 (Prdm14).